The following is a 664-amino-acid chain: Protein fem-1 homolog CG6966 (664 aa).

ANK repeat units lie at residues 40 to 70 (NGATPLVISCRNGHYDIVEYLLTKCRANVEQ), 82 to 111 (EDAPPLWCAAAAGHLGIVKMLVRRGANVNS), 115 to 144 (TNSTPLRAACFDGHYEIVKYLVHHGADFEV), 148 to 177 (HGHTCLMIACYKGHFRIAQYLLSLNADVNR), 181 to 210 (KGNTALHDCAESGSLQILQLLLKHGATMDV), and 213 to 242 (YGMTPLLAASVTGHMPIVEHLITLPCVSRE). 2 TPR repeats span residues 245–279 (IHALELLGATYVDRKRDMAAALNLWRRALEERAVE) and 335–368 (SYYIRFRGAHYADAGRFDRCIELWSYALTMQQKI). Residues 433-460 (QQKDQQHPQKQLPAADKSPSCSASSSAS) form a disordered region. The segment covering 450–460 (SPSCSASSSAS) has biased composition (low complexity). 2 ANK repeats span residues 529–571 (FDRT…DPNA) and 575–605 (AGNTPLHLATMQPYVEPLSHILLEGGAHLDT).

Belongs to the fem-1 family. As to quaternary structure, component of a CRL2 E3 ubiquitin-protein ligase complex, also named ECS (Elongin BC-CUL2/5-SOCS-box protein) complex.

It participates in protein modification; protein ubiquitination. Its function is as follows. Substrate-recognition component of a Cul2-RING (CRL2) E3 ubiquitin-protein ligase complex of the DesCEND (destruction via C-end degrons) pathway, which recognizes a C-degron located at the extreme C terminus of target proteins, leading to their ubiquitination and degradation. The C-degron recognized by the DesCEND pathway is usually a motif of less than ten residues and can be present in full-length proteins, truncated proteins or proteolytically cleaved forms. In Drosophila melanogaster (Fruit fly), this protein is Protein fem-1 homolog CG6966.